The following is a 123-amino-acid chain: DNA-directed RNA polymerase I subunit RPA12 (123 aa).

The Zn(2+) site is built by Cys17, Cys20, Cys35, Cys38, Cys84, and Cys87. The C4-type zinc finger occupies 17-38 (CPDCGSVLPLPGVQDTVICPRC). The segment at 80-120 (VDRRCSRCGHEGMAYYTRQMRSADEGQTVFYTCINCKFQEK) adopts a TFIIS-type zinc-finger fold. The short motif at 103–104 (DE) is the Hairpin element. The Zn(2+) site is built by Cys112 and Cys115.

This sequence belongs to the archaeal RpoM/eukaryotic RPA12/RPB9/RPC11 RNA polymerase family. As to quaternary structure, component of the RNA polymerase I (Pol I) complex consisting of 13 subunits: a ten-subunit catalytic core composed of POLR1A/RPA1, POLR1B/RPA2, POLR1C/RPAC1, POLR1D/RPAC2, POLR1H/RPA12, POLR2E/RPABC1, POLR2F/RPABC2, POLR2H/RPABC3, POLR2K/RPABC4 and POLR2L/RPABC5; a mobile stalk subunit POLR1F/RPA43 protruding from the core and additional subunits homologous to general transcription factors POLR1E/RPA49 and POLR1G/RPA34. Part of Pol I pre-initiation complex (PIC), in which Pol I core assembles with RRN3 and promoter-bound UTBF and SL1/TIF-IB complex.

The protein resides in the nucleus. It is found in the nucleolus. Functionally, core component of RNA polymerase I (Pol I), a DNA-dependent RNA polymerase which synthesizes ribosomal RNA precursors using the four ribonucleoside triphosphates as substrates. Can mediate Pol I proofreading of the nascent RNA transcript. Anchors into the Pol I active site to monitor transcription fidelity and cleave mis-incorporated 5'-ribonucleotides. The sequence is that of DNA-directed RNA polymerase I subunit RPA12 from Rattus norvegicus (Rat).